The following is an 80-amino-acid chain: Tail fiber assembly helper protein (80 aa).

As to quaternary structure, homotrimer. Homohexamer.

Its function is as follows. Chaperone essential for folding and oligomerization of both long and short tail fibers. Required for the assembly of gp34, gp36 and gp37 (components of the long tail fiber) and p12 (the subunit of the short tail fiber). Together with gp38, participates in the formation of the distal part of the long fibers. This Escherichia coli (Bacteriophage T4) protein is Tail fiber assembly helper protein (57).